A 560-amino-acid polypeptide reads, in one-letter code: Arginine--tRNA ligase (560 aa).

Positions alanine 135 to asparagine 145 match the 'HIGH' region motif.

This sequence belongs to the class-I aminoacyl-tRNA synthetase family. In terms of assembly, monomer.

The protein localises to the cytoplasm. The enzyme catalyses tRNA(Arg) + L-arginine + ATP = L-arginyl-tRNA(Arg) + AMP + diphosphate. This is Arginine--tRNA ligase from Moorella thermoacetica (strain ATCC 39073 / JCM 9320).